Consider the following 333-residue polypeptide: Viral cathepsin (333 aa).

The signal sequence occupies residues 1-20 (MTKLLNFVILASVLTVTAHA). A propeptide spans 21 to 124 (LTYDLNNSDE…VIKDEPQALL (104 aa)) (activation peptide). 3 disulfide bridges follow: cysteine 145/cysteine 186, cysteine 179/cysteine 219, and cysteine 272/cysteine 321. Cysteine 148 is a catalytic residue. The N-linked (GlcNAc...) asparagine; by host glycan is linked to asparagine 170. Catalysis depends on residues histidine 280 and asparagine 300.

It belongs to the peptidase C1 family. Post-translationally, synthesized as an inactive proenzyme and activated by proteolytic removal of the inhibitory propeptide.

It carries out the reaction Endopeptidase of broad specificity, hydrolyzing substrates of both cathepsin L and cathepsin B.. Cysteine protease that plays an essential role in host liquefaction to facilitate horizontal transmission of the virus. May participate in the degradation of foreign protein expressed by the baculovirus system. The chain is Viral cathepsin (VCATH) from Cydia pomonella granulosis virus (isolate Mexico/1963) (CpGV).